The primary structure comprises 1274 residues: ABC multidrug transporter E (1274 aa).

N48 is a glycosylation site (N-linked (GlcNAc...) asparagine). Positions 120–344 constitute an ABC transmembrane type-1 1 domain; it reads FCFRVTGLRV…IASPLIIVSK (225 aa). Transmembrane regions (helical) follow at residues 183–203, 205–225, 280–300, and 321–341; these read LALLLAAFIIAFKYSWALTLV, SSALLFVVVGCSVTLPFMTKI, IFGIHFALVFFALYASFSLAF, and VFFSVMIVVSVLGNIASPLII. Positions 377–629 constitute an ABC transporter 1 domain; the sequence is IIFRDVRFTY…EGGVYRDLVN (253 aa). 412 to 419 provides a ligand contact to ATP; sequence GPSGSGKS. Residues N473 and N580 are each glycosylated (N-linked (GlcNAc...) asparagine). A run of 2 helical transmembrane segments spans residues 697-717 and 737-757; these read VAVLISTAGAGTAFPLQSWLF and FWALMFFLLALAVGVLYSTVG. In terms of domain architecture, ABC transmembrane type-1 2 spans 697–984; the sequence is VAVLISTAGA…FFSFASNFAQ (288 aa). Residue N792 is glycosylated (N-linked (GlcNAc...) asparagine). Transmembrane regions (helical) follow at residues 818 to 838, 840 to 860, and 924 to 944; these read FPLISTFSMIGCIAIAFSFGW, LSLVTVFAALPCTFLAAFMRI, and LIFAFSDSVELCAMALTFWYG. The region spanning 1023–1269 is the ABC transporter 2 domain; it reads VEFHDVSFRY…KGTYWQMVSS (247 aa). N1044 is a glycosylation site (N-linked (GlcNAc...) asparagine). Position 1057–1064 (1057–1064) interacts with ATP; the sequence is GPSGCGKT. N-linked (GlcNAc...) asparagine glycosylation occurs at N1117.

It belongs to the ABC transporter superfamily. ABCB family. Multidrug resistance exporter (TC 3.A.1.201) subfamily.

It is found in the cell membrane. In terms of biological role, pleiotropic ABC efflux transporter that may be involved in A.fumigatus adaptation to azoles such as vorizonazole. The polypeptide is ABC multidrug transporter E (Aspergillus fumigatus (strain ATCC MYA-4609 / CBS 101355 / FGSC A1100 / Af293) (Neosartorya fumigata)).